The chain runs to 233 residues: Large ribosomal subunit protein uL1 (233 aa).

Belongs to the universal ribosomal protein uL1 family. As to quaternary structure, part of the 50S ribosomal subunit.

Its function is as follows. Binds directly to 23S rRNA. The L1 stalk is quite mobile in the ribosome, and is involved in E site tRNA release. In terms of biological role, protein L1 is also a translational repressor protein, it controls the translation of the L11 operon by binding to its mRNA. The protein is Large ribosomal subunit protein uL1 of Photobacterium profundum (strain SS9).